Consider the following 182-residue polypeptide: ATP-dependent protease subunit HslV (182 aa).

Thr-10 is an active-site residue. Na(+) is bound by residues Ala-166, Cys-169, and Ser-172.

The protein belongs to the peptidase T1B family. HslV subfamily. As to quaternary structure, a double ring-shaped homohexamer of HslV is capped on each side by a ring-shaped HslU homohexamer. The assembly of the HslU/HslV complex is dependent on binding of ATP.

It is found in the cytoplasm. The enzyme catalyses ATP-dependent cleavage of peptide bonds with broad specificity.. Allosterically activated by HslU binding. Functionally, protease subunit of a proteasome-like degradation complex believed to be a general protein degrading machinery. The chain is ATP-dependent protease subunit HslV from Rickettsia bellii (strain OSU 85-389).